The sequence spans 87 residues: MQASDRFNINSQLEHLQAKYVGTGHADLSRFEWAVNIQRDSYASYIGHYPMLSYFAIAENESIGRERYNFMQKMLLPCGLPPEREEE.

It belongs to the SF3B5 family.

This is an uncharacterized protein from Arabidopsis thaliana (Mouse-ear cress).